The chain runs to 1555 residues: Bromodomain adjacent to zinc finger domain protein 1A (1555 aa).

The interval 1 to 128 is required for association with the CHRAC1/POLE3 complex; sequence MPLLHRKPFV…EETVEVIRNN (128 aa). The tract at residues 1–128 is required for interaction with the CHRAC1-POLE3 heterodimer. Required for interaction with the CHRAC1-POLE3 heterodimer; that stretch reads MPLLHRKPFV…EETVEVIRNN (128 aa). The interval 1–133 is required for interaction with NCOR1; the sequence is MPLLHRKPFV…VIRNNGTRLQ (133 aa). A WAC domain is found at 22–128; the sequence is EEVFYCKVTN…EETVEVIRNN (107 aa). 2 positions are modified to phosphoserine: Ser270 and Ser284. The region spanning 422 to 488 is the DDT domain; that stretch reads PEVFGDALMV…LTAIFQAMAE (67 aa). Positions 635 to 701 form a coiled coil; sequence IEDYVDVLRQ…EDEQRNSAAV (67 aa). Basic and acidic residues-rich tracts occupy residues 652-664 and 671-696; these read LKAE…REAT and RKEE…DEQR. The interval 652-751 is disordered; the sequence is LKAEQHRKER…KRSRRGKVGQ (100 aa). The interaction with SMARCA5 stretch occupies residues 668–935; sequence IRRRKEEKLK…QEKSRICAQL (268 aa). Positions 668-935 are required for interaction with SMARCA5 and formation of the CHRAC ISWI chromatin remodeling complex; sequence IRRRKEEKLK…QEKSRICAQL (268 aa). 2 stretches are compositionally biased toward acidic residues: residues 705 to 714 and 728 to 737; these read GEEEREDFDT and PDVVTEDEDD. Residue Thr732 is modified to Phosphothreonine. Residues 773–798 are a coiled coil; that stretch reads SADAEEALRQEQQQKEKELLDKIQSA. Disordered regions lie at residues 843–874 and 944–969; these read PSSF…SSLD and HFSD…CDIS. The span at 864 to 873 shows a compositional bias: low complexity; that stretch reads SFLSESTSSL. Lys954 is covalently cross-linked (Glycyl lysine isopeptide (Lys-Gly) (interchain with G-Cter in SUMO2)). Ser962 and Ser963 each carry phosphoserine. A PHD-type zinc finger spans residues 1149–1199; the sequence is NARCKICRKKGDAENMVLCDGCDRGHHTYCVRPKLKAVPDGDWFCPECRPK. Positions 1203 to 1429 are disordered; it reads RRLSSRQRPS…LNRRSSGRQG (227 aa). Acidic residues predominate over residues 1214-1258; it reads ESDEEMEEGMEDDDDEVDDDDEEGQSEEEEYEVEQDEEDSDDDEA. The span at 1263–1277 shows a compositional bias: basic residues; the sequence is KRGRPQVRLPIKTKG. Ser1282 carries the phosphoserine modification. The span at 1297-1313 shows a compositional bias: polar residues; it reads SRSQQSTPKNTAKSASK. 7 positions are modified to phosphoserine: Ser1320, Ser1339, Ser1352, Ser1370, Ser1401, Ser1412, and Ser1416. Polar residues predominate over residues 1369–1386; sequence HSPSFTNFRVSTSRSSRQ. The 104-residue stretch at 1429-1532 folds into the Bromo domain; it reads GGVHELSAFE…AFFHIQAQKL (104 aa). At Thr1546 the chain carries Phosphothreonine.

This sequence belongs to the WAL family. As to quaternary structure, component of the ACF-1 ISWI chromatin remodeling complex at least composed of SMARCA1 and BAZ1A, which regulates the spacing of histone octamers on the DNA template to facilitate access to DNA. Within the ACF-1 ISWI chromatin remodeling complex interacts with SMARCA1; the interaction is direct. Component of the ACF-5 ISWI chromatin remodeling complex (also called the ACF complex) at least composed of BAZ1A and SMARCA5/SNF2H, which regulates the spacing of histone octamers on the DNA template to facilitate access to DNA. Within the ACF-5 ISWI chromatin remodeling complex interacts with SMARCA5/SNF2H; the interaction is direct. Component of the CHRAC ISWI chromatin remodeling complex at least composed of SMARCA5/SNF2H, BAZ1A/ACF1, CHRAC1 and POLE3; the complex preferentially binds DNA through the CHRAC1-POLE3 heterodimer and possesses ATP-dependent nucleosome-remodeling activity. Within the complex interacts (via N-terminus) with POLE3-CHRAC1 heterodimer; the interaction is direct and is required for the complex to preferentially bind to DNA. Within the complex interacts with SMARCA5/SNF2H; the interaction is direct and promotes the interaction with the POLE3-CHRAC1 heterodimer. Interacts with NCOR1 (via its RD1 domain); the interaction corepresses a number of NCOR1-regulated genes.

Its subcellular location is the nucleus. Its function is as follows. Regulatory subunit of the ATP-dependent ACF-1 and ACF-5 ISWI chromatin remodeling complexes, which form ordered nucleosome arrays on chromatin and slide edge- and center-positioned histone octamers away from their original location on the DNA template to facilitate access to DNA during DNA-templated processes such as DNA replication, transcription, and repair. Both complexes regulate the spacing of nucleosomes along the chromatin and have the ability to slide mononucleosomes to the center of a DNA template in an ATP-dependent manner. The ACF-1 ISWI chromatin remodeling complex has a lower ATP hydrolysis rate than the ACF-5 ISWI chromatin remodeling complex. Has a role in sensing the length of DNA which flank nucleosomes, which modulates the nucleosome spacing activity of the ACF-5 ISWI chromatin remodeling complex. Involved in DNA replication and together with SMARCA5/SNF2H is required for replication of pericentric heterochromatin in S-phase. May have a role in nuclear receptor-mediated transcription repression. This chain is Bromodomain adjacent to zinc finger domain protein 1A (Baz1a), found in Mus musculus (Mouse).